The sequence spans 186 residues: Elongation factor P (186 aa).

Belongs to the elongation factor P family.

Its subcellular location is the cytoplasm. It functions in the pathway protein biosynthesis; polypeptide chain elongation. Its function is as follows. Involved in peptide bond synthesis. Stimulates efficient translation and peptide-bond synthesis on native or reconstituted 70S ribosomes in vitro. Probably functions indirectly by altering the affinity of the ribosome for aminoacyl-tRNA, thus increasing their reactivity as acceptors for peptidyl transferase. This chain is Elongation factor P, found in Enterococcus faecalis (strain ATCC 700802 / V583).